The primary structure comprises 197 residues: Nucleoid occlusion factor SlmA (197 aa).

Residues 7 to 67 (INRREHILQC…GLIEFIEESL (61 aa)) enclose the HTH tetR-type domain. The H-T-H motif DNA-binding region spans 30-49 (TTAKLASEVGVSEAALYRHF). A coiled-coil region spans residues 109-136 (DALLGENERLRSRISNLFAKIETQLKQI).

Belongs to the nucleoid occlusion factor SlmA family. Homodimer. Interacts with FtsZ.

The protein resides in the cytoplasm. The protein localises to the nucleoid. Functionally, required for nucleoid occlusion (NO) phenomenon, which prevents Z-ring formation and cell division over the nucleoid. Acts as a DNA-associated cell division inhibitor that binds simultaneously chromosomal DNA and FtsZ, and disrupts the assembly of FtsZ polymers. SlmA-DNA-binding sequences (SBS) are dispersed on non-Ter regions of the chromosome, preventing FtsZ polymerization at these regions. This is Nucleoid occlusion factor SlmA from Shewanella baltica (strain OS223).